The primary structure comprises 88 residues: uncharacterized protein (88 aa).

This is an uncharacterized protein from Acidianus convivator (ABV).